Consider the following 236-residue polypeptide: 1-(5-phosphoribosyl)-5-[(5-phosphoribosylamino)methylideneamino] imidazole-4-carboxamide isomerase (236 aa).

Catalysis depends on Asp-8, which acts as the Proton acceptor. Residue Asp-129 is the Proton donor of the active site.

Belongs to the HisA/HisF family.

The protein localises to the cytoplasm. It catalyses the reaction 1-(5-phospho-beta-D-ribosyl)-5-[(5-phospho-beta-D-ribosylamino)methylideneamino]imidazole-4-carboxamide = 5-[(5-phospho-1-deoxy-D-ribulos-1-ylimino)methylamino]-1-(5-phospho-beta-D-ribosyl)imidazole-4-carboxamide. It participates in amino-acid biosynthesis; L-histidine biosynthesis; L-histidine from 5-phospho-alpha-D-ribose 1-diphosphate: step 4/9. In Methanocorpusculum labreanum (strain ATCC 43576 / DSM 4855 / Z), this protein is 1-(5-phosphoribosyl)-5-[(5-phosphoribosylamino)methylideneamino] imidazole-4-carboxamide isomerase.